The sequence spans 601 residues: NADH-quinone oxidoreductase subunit C/D (601 aa).

The tract at residues 1-191 (MKLTRDFPSN…DPFMLDAAKQ (191 aa)) is NADH dehydrogenase I subunit C. The interval 215–601 (DYMFLNLGPN…IDFVMSDVDR (387 aa)) is NADH dehydrogenase I subunit D.

In the N-terminal section; belongs to the complex I 30 kDa subunit family. It in the C-terminal section; belongs to the complex I 49 kDa subunit family. In terms of assembly, NDH-1 is composed of 13 different subunits. Subunits NuoB, CD, E, F, and G constitute the peripheral sector of the complex.

It localises to the cell inner membrane. It carries out the reaction a quinone + NADH + 5 H(+)(in) = a quinol + NAD(+) + 4 H(+)(out). NDH-1 shuttles electrons from NADH, via FMN and iron-sulfur (Fe-S) centers, to quinones in the respiratory chain. The immediate electron acceptor for the enzyme in this species is believed to be ubiquinone. Couples the redox reaction to proton translocation (for every two electrons transferred, four hydrogen ions are translocated across the cytoplasmic membrane), and thus conserves the redox energy in a proton gradient. The protein is NADH-quinone oxidoreductase subunit C/D of Aeromonas salmonicida (strain A449).